Consider the following 144-residue polypeptide: Protein archease (144 aa).

3 residues coordinate Ca(2+): Asp14, Asp143, and Ile144.

This sequence belongs to the archease family.

Activates the tRNA-splicing ligase complex by facilitating the enzymatic turnover of catalytic subunit RtcB. Acts by promoting the guanylylation of RtcB, a key intermediate step in tRNA ligation. Can also alter the NTP specificity of RtcB such that ATP, dGTP or ITP is used efficiently. The chain is Protein archease from Aeropyrum pernix (strain ATCC 700893 / DSM 11879 / JCM 9820 / NBRC 100138 / K1).